The chain runs to 472 residues: Eukaryotic translation initiation factor 2 subunit 3, X-linked (472 aa).

Position 2 is an N-acetylalanine (Ala-2). Ser-16 bears the Phosphoserine mark. One can recognise a tr-type G domain in the interval 39–248 (QATINIGTIG…IVKKIPVPPR (210 aa)). A G1 region spans residues 48–55 (GHVAHGKS). Position 51–56 (51–56 (AHGKST)) interacts with GTP. The tract at residues 76 to 80 (NITIK) is G2. Residues 134–137 (DCPG) are G3. GTP is bound by residues 190-193 (NKID) and 225-227 (SAQ). The segment at 190 to 193 (NKID) is G4. The segment at 225–227 (SAQ) is G5. The interval 457–469 (GQIRRGVTIKPTV) is interacts with Cdc123.

The protein belongs to the TRAFAC class translation factor GTPase superfamily. Classic translation factor GTPase family. EIF2G subfamily. Eukaryotic translation initiation factor 2 eIF2 is a heterotrimeric complex composed of an alpha (EIF2S1), a beta (EIF2S2) and a gamma (EIF2S3) chain. eIF2 is member of the 43S pre-initiation complex (43S PIC). Interacts (via C-terminus) with CDC123; the interaction is direct. Widely expressed. In the brain, high mRNA levels are observed in specific regions, including the habenula, anterodorsal thalamic nucleus, hippocampus, hypothalamus, and cerebellum. Also expressed in the embryonic brain. There is a differential expression between males and females, which is tissue-specific. Females tend to have higher expression levels than males in the brain (cortex, hippocampus and paraventricular nucleus, but not in the habenula), as well as in other tissues. The up-regulation observed in females at the mRNA level may be due to the presence of 2 active copies of the gene.

The protein resides in the cytoplasm. Its subcellular location is the cytosol. The enzyme catalyses GTP + H2O = GDP + phosphate + H(+). Its function is as follows. Member of the eIF2 complex that functions in the early steps of protein synthesis by forming a ternary complex with GTP and initiator tRNA. This complex binds to a 40S ribosomal subunit, followed by mRNA binding to form the 43S pre-initiation complex (43S PIC). Junction of the 60S ribosomal subunit to form the 80S initiation complex is preceded by hydrolysis of the GTP bound to eIF2 and release of an eIF2-GDP binary complex. In order for eIF2 to recycle and catalyze another round of initiation, the GDP bound to eIF2 must exchange with GTP by way of a reaction catalyzed by eIF-2B. Along with its paralog on chromosome Y, may contribute to spermatogenesis up to the round spermatid stage. The chain is Eukaryotic translation initiation factor 2 subunit 3, X-linked (Eif2s3x) from Mus musculus (Mouse).